The primary structure comprises 332 residues: MLMTRPNLKGRSFLAEKDFTQEELLYFLDLAAELKEKKKNGIPHHYLEGKNVALLFEKTSTRTRCAFTVACTDLGANPEYLGKSDIQLGKKESVEDTAKVLGRMFDGIEFRGFNHETVESLAQNSGVPVWNGLTDMWHPTQTLADLLTIREHVGKLKNVKLVYVGDGRNNVANSLLVGGAIVGMDVRICTPETLWPAQEVIDLAKKYNEQVMITSNVEEAVANADVIYTDVWVSMGEEEKFAERVKLLKPYQVNMKMIKETGNENVIFLHCLPAFHDVETMYGEEVYEKYGLKEMEVTDEVFRSKHSKVFDQAENRMHTIKAVMAATLGNME.

Carbamoyl phosphate-binding positions include 60–63 (STRT), glutamine 87, arginine 111, and 138–141 (HPTQ). L-ornithine contacts are provided by residues asparagine 170, aspartate 230, and 234–235 (SM). Residues 271–272 (CL) and arginine 316 contribute to the carbamoyl phosphate site.

It belongs to the aspartate/ornithine carbamoyltransferase superfamily. OTCase family.

Its subcellular location is the cytoplasm. It catalyses the reaction carbamoyl phosphate + L-ornithine = L-citrulline + phosphate + H(+). It participates in amino-acid degradation; L-arginine degradation via ADI pathway; carbamoyl phosphate from L-arginine: step 2/2. Functionally, reversibly catalyzes the transfer of the carbamoyl group from carbamoyl phosphate (CP) to the N(epsilon) atom of ornithine (ORN) to produce L-citrulline. The chain is Ornithine carbamoyltransferase, catabolic from Bacillus cereus (strain ATCC 10987 / NRS 248).